We begin with the raw amino-acid sequence, 159 residues long: Aphid transmission protein (159 aa).

The protein belongs to the caulimoviridae ORF II family.

In terms of biological role, this protein is involved in virus transmission. This chain is Aphid transmission protein, found in Cauliflower mosaic virus (strain BBC) (CaMV).